We begin with the raw amino-acid sequence, 144 residues long: uncharacterized protein (144 aa).

Basic residues predominate over residues 124–133 (KALNRKKSKT). Residues 124–144 (KALNRKKSKTKNGEKNGEGKS) form a disordered region. Over residues 134–144 (KNGEKNGEGKS) the composition is skewed to basic and acidic residues.

This is an uncharacterized protein from Acidianus filamentous virus 1 (isolate United States/Yellowstone) (AFV-1).